Here is a 288-residue protein sequence, read N- to C-terminus: Probable ketoamine kinase PM0587 (288 aa).

An ATP-binding site is contributed by 92 to 94 (EAL).

The protein belongs to the fructosamine kinase family.

Ketoamine kinase that phosphorylates ketoamines on the third carbon of the sugar moiety to generate ketoamine 3-phosphate. The polypeptide is Probable ketoamine kinase PM0587 (Pasteurella multocida (strain Pm70)).